We begin with the raw amino-acid sequence, 349 residues long: S-adenosylmethionine:tRNA ribosyltransferase-isomerase (349 aa).

Belongs to the QueA family. In terms of assembly, monomer.

The protein localises to the cytoplasm. It carries out the reaction 7-aminomethyl-7-carbaguanosine(34) in tRNA + S-adenosyl-L-methionine = epoxyqueuosine(34) in tRNA + adenine + L-methionine + 2 H(+). It participates in tRNA modification; tRNA-queuosine biosynthesis. Its function is as follows. Transfers and isomerizes the ribose moiety from AdoMet to the 7-aminomethyl group of 7-deazaguanine (preQ1-tRNA) to give epoxyqueuosine (oQ-tRNA). This chain is S-adenosylmethionine:tRNA ribosyltransferase-isomerase, found in Azotobacter vinelandii (strain DJ / ATCC BAA-1303).